Here is an 83-residue protein sequence, read N- to C-terminus: Small ribosomal subunit protein uS17 (83 aa).

This sequence belongs to the universal ribosomal protein uS17 family. Part of the 30S ribosomal subunit.

One of the primary rRNA binding proteins, it binds specifically to the 5'-end of 16S ribosomal RNA. This Synechococcus sp. (strain RCC307) protein is Small ribosomal subunit protein uS17.